Consider the following 735-residue polypeptide: Photosystem I P700 chlorophyll a apoprotein A2 (735 aa).

The next 8 helical transmembrane spans lie at 47-70 (IFAS…FHVA), 136-159 (LFTG…LHLQ), 176-200 (LNHH…HVAI), 274-292 (MAHH…GHMY), 331-354 (LHFQ…QHIY), 370-396 (AALY…IFFI), 418-440 (AIIS…LYVH), and 518-536 (FLVH…LILV). [4Fe-4S] cluster is bound by residues C560 and C569. Transmembrane regions (helical) follow at residues 576-597 (AFYL…YFHW) and 644-666 (LSVW…MFLI). Chlorophyll a contacts are provided by H655, M663, and Y671. W672 provides a ligand contact to phylloquinone. A helical transmembrane segment spans residues 708 to 728 (LVGLVHFSVGYIFTYAAFLIA).

The protein belongs to the PsaA/PsaB family. The PsaA/B heterodimer binds the P700 chlorophyll special pair and subsequent electron acceptors. PSI consists of a core antenna complex that captures photons, and an electron transfer chain that converts photonic excitation into a charge separation. The eukaryotic PSI reaction center is composed of at least 11 subunits. P700 is a chlorophyll a/chlorophyll a' dimer, A0 is one or more chlorophyll a, A1 is one or both phylloquinones and FX is a shared 4Fe-4S iron-sulfur center. is required as a cofactor.

The protein resides in the plastid. It localises to the chloroplast thylakoid membrane. The catalysed reaction is reduced [plastocyanin] + hnu + oxidized [2Fe-2S]-[ferredoxin] = oxidized [plastocyanin] + reduced [2Fe-2S]-[ferredoxin]. In terms of biological role, psaA and PsaB bind P700, the primary electron donor of photosystem I (PSI), as well as the electron acceptors A0, A1 and FX. PSI is a plastocyanin/cytochrome c6-ferredoxin oxidoreductase, converting photonic excitation into a charge separation, which transfers an electron from the donor P700 chlorophyll pair to the spectroscopically characterized acceptors A0, A1, FX, FA and FB in turn. Oxidized P700 is reduced on the lumenal side of the thylakoid membrane by plastocyanin or cytochrome c6. This Chlamydomonas moewusii (Chlamydomonas eugametos) protein is Photosystem I P700 chlorophyll a apoprotein A2.